The sequence spans 284 residues: 2-dehydro-3-deoxyphosphooctonate aldolase (284 aa).

It belongs to the KdsA family.

The protein localises to the cytoplasm. It carries out the reaction D-arabinose 5-phosphate + phosphoenolpyruvate + H2O = 3-deoxy-alpha-D-manno-2-octulosonate-8-phosphate + phosphate. It functions in the pathway carbohydrate biosynthesis; 3-deoxy-D-manno-octulosonate biosynthesis; 3-deoxy-D-manno-octulosonate from D-ribulose 5-phosphate: step 2/3. The protein operates within bacterial outer membrane biogenesis; lipopolysaccharide biosynthesis. The sequence is that of 2-dehydro-3-deoxyphosphooctonate aldolase from Klebsiella pneumoniae subsp. pneumoniae (strain ATCC 700721 / MGH 78578).